Here is a 590-residue protein sequence, read N- to C-terminus: Pescadillo homolog (590 aa).

The BRCT domain maps to 332-422 (VCKSLFKDLK…IILPTEKYLV (91 aa)). A disordered region spans residues 561–590 (AMKISQSRKRSGVEIIEQRKKRLNDTQPSS).

This sequence belongs to the pescadillo family. In terms of assembly, interacts with BOP1 and WDR12. Interacts with NSN1. As to expression, expressed in shoot and root apical meristems, epidermal cells and vasculature of developing leaves, trichome progenitor cells, young flowers, developing pollen grains and ovules, and mature pollen grains.

It is found in the nucleus. Its subcellular location is the nucleolus. It localises to the nucleoplasm. Its function is as follows. Required for maturation of ribosomal RNAs and formation of the large ribosomal subunit. Plays an essential role in cell growth and survival through its regulation of ribosome biogenesis and mitotic progression. Required for normal root cell growth and differentiation. The chain is Pescadillo homolog from Arabidopsis thaliana (Mouse-ear cress).